Here is a 497-residue protein sequence, read N- to C-terminus: Acetyl-coenzyme A carboxylase carboxyl transferase subunit beta, chloroplastic (497 aa).

The CoA carboxyltransferase N-terminal domain occupies 230 to 497; the sequence is LWVQCENCYG…FFPVNSNSIK (268 aa). Zn(2+) is bound by residues cysteine 234, cysteine 237, cysteine 253, and cysteine 256. The C4-type zinc finger occupies 234-256; sequence CENCYGLNYKKFFRSKFNICEQC.

This sequence belongs to the AccD/PCCB family. As to quaternary structure, acetyl-CoA carboxylase is a heterohexamer composed of biotin carboxyl carrier protein, biotin carboxylase and 2 subunits each of ACCase subunit alpha and ACCase plastid-coded subunit beta (accD). Zn(2+) serves as cofactor.

The protein localises to the plastid. It is found in the chloroplast stroma. The catalysed reaction is N(6)-carboxybiotinyl-L-lysyl-[protein] + acetyl-CoA = N(6)-biotinyl-L-lysyl-[protein] + malonyl-CoA. Its pathway is lipid metabolism; malonyl-CoA biosynthesis; malonyl-CoA from acetyl-CoA: step 1/1. Component of the acetyl coenzyme A carboxylase (ACC) complex. Biotin carboxylase (BC) catalyzes the carboxylation of biotin on its carrier protein (BCCP) and then the CO(2) group is transferred by the transcarboxylase to acetyl-CoA to form malonyl-CoA. The polypeptide is Acetyl-coenzyme A carboxylase carboxyl transferase subunit beta, chloroplastic (Nandina domestica (Heavenly bamboo)).